A 437-amino-acid polypeptide reads, in one-letter code: MPVSRVKVKNRHLKKKTKKPLAFYKPATKFAGAVLIAGTLTTTHELLLQQTSPMVQAATNSSEVFIESIAASAKPVADANGLYPSVMIAQAILESNWGSSQLSRAPYYNLFGIQGTYQGKSVVFKTQEYLNGKWVTKDMPFRVYPSFNQSFQDNAYVLKTTNFGNGPYYAKAWRANAATYQDATAALTGRYATDPSYGASLNRIISQYNLTRFDGASSAGNTNSGGSTTTITNNNSGTNSSSTTYTVKSGDTLWGISQRYGISVAQIQSANNLKSTIIYIGQKLVLTGSASSTNSGGSNNSASTTPTTSVTPAKPTSQTTVKVKSGDTLWALSVKYKTSIAQLKSWNHLSSDTIYIGQNLIVSQSAAASNPSTGSGSTATNNSNSTSSNSNASIHKVVKGDTLWGLSQKSGSPIASIKAWNHLSSDTILIGQYLRIK.

The first 57 residues, 1 to 57 (MPVSRVKVKNRHLKKKTKKPLAFYKPATKFAGAVLIAGTLTTTHELLLQQTSPMVQA), serve as a signal peptide directing secretion. Disordered stretches follow at residues 217–244 (SSAG…SSTT), 290–320 (ASST…SQTT), and 367–392 (AASN…NSNA). The 44-residue stretch at 243–286 (TTYTVKSGDTLWGISQRYGISVAQIQSANNLKSTIIYIGQKLVL) folds into the LysM 1 domain. Residues 290 to 317 (ASSTNSGGSNNSASTTPTTSVTPAKPTS) show a composition bias toward low complexity. Residues 319-362 (TTVKVKSGDTLWALSVKYKTSIAQLKSWNHLSSDTIYIGQNLIV) form the LysM 2 domain. The LysM 3 domain occupies 393 to 436 (SIHKVVKGDTLWGLSQKSGSPIASIKAWNHLSSDTILIGQYLRI).

The protein belongs to the glycosyl hydrolase 73 family.

It is found in the secreted. It catalyses the reaction Hydrolysis of (1-&gt;4)-beta-linkages between N-acetylmuramic acid and N-acetyl-D-glucosamine residues in a peptidoglycan and between N-acetyl-D-glucosamine residues in chitodextrins.. Hydrolyzes the cell wall of L.lactis and M.lysodeikticus. Required for cell separation during growth. The chain is Probable N-acetylmuramidase (acmA) from Lactococcus lactis subsp. cremoris (strain MG1363).